A 168-amino-acid chain; its full sequence is Putative insulin-like growth factor 2 antisense gene protein (168 aa).

2 disordered regions span residues 1–91 (MSKR…ERSN) and 108–168 (PLRR…RPGK). 2 stretches are compositionally biased toward basic residues: residues 59 to 70 (AQRRRGSARRGA) and 159 to 168 (RWRQPGRPGK).

This is Putative insulin-like growth factor 2 antisense gene protein (IGF2-AS) from Homo sapiens (Human).